The following is a 1136-amino-acid chain: Solute carrier family 12 member 2 (1136 aa).

Disordered stretches follow at residues 1–73 (MSAS…SVSG) and 91–121 (PDAAPAETAQNGDTVMSEGSLHSSTGGQQHH). Over 1 to 208 (MSASPPISAG…SESKGVVKFG (208 aa)) the chain is Cytoplasmic. A phosphothreonine mark is found at T125, T129, T134, T139, and T152. Residues 209-234 (WIKGVLVRCMLNIWGVMLFIRMTWIV) form a discontinuously helical membrane-spanning segment. L219 contributes to the Na(+) binding site. K(+) is bound by residues N220 and I221. Position 222 (W222) interacts with Na(+). Residues G223, V224, and M225 each contribute to the chloride site. At 235–238 (GQAG) the chain is on the extracellular side. Residues 239 to 261 (IAYSCIIVIMATVVTTITGCSTS) traverse the membrane as a helical segment. At 262 to 285 (AIATNGFVRGGGAYYLISRSLGPE) the chain is on the cytoplasmic side. A helical membrane pass occupies residues 286 to 314 (FGGSIGLIFAFANAVAVAMYVVGFAETVV). Position 294 (F294) interacts with chloride. Y305 contributes to the K(+) binding site. Residues 315–327 (ELLMDSGLLMIDQ) lie on the Extracellular side of the membrane. 2 consecutive transmembrane segments (helical) span residues 328 to 351 (TNDIRVIGTITVILLLGISVAGME) and 352 to 376 (WEAKAQIFLLVILITAIFNYFIGSF). The Extracellular portion of the chain corresponds to 377–407 (IAVDSKKKFGFFSYDAGILAENFGPDFRGQT). Residues 408–427 (FFSVFSIFFPAATGILAGAN) traverse the membrane as a discontinuously helical segment. K(+)-binding residues include P417, A418, and T420. Chloride contacts are provided by P417 and A418. Residues G421 and I422 each coordinate chloride. The Cytoplasmic portion of the chain corresponds to 428-438 (ISGDLADPQMA). Residues 439-462 (IPKGTLLAILITGLVYVGVAISAG) traverse the membrane as a helical segment. Residues 463–523 (ACIVRDATGI…DFQVMSVVSG (61 aa)) are Extracellular-facing. N-linked (GlcNAc...) asparagine glycans are attached at residues N475 and N481. C496 and C507 are oxidised to a cystine. The helical transmembrane segment at 524 to 551 (FSPLISAGIFSATLSSALASLVSAPKVF) threads the bilayer. Positions 535, 538, and 539 each coordinate Na(+). Residues 552-576 (QALCKDNIYPGIAIFGKGYGKNNEP) are Cytoplasmic-facing. 2 helical membrane-spanning segments follow: residues 577–595 (LRGYFLTFGIALAFILIAE) and 596–619 (LNVIAPIISNFFLASYALINFSVF). Chloride-binding residues include F607 and Y611. The Cytoplasmic segment spans residues 620–636 (HASLANSPGWRPSFKYY). 2 helical membrane passes run 637–656 (NMWASLAGAILCCVVMFIIN) and 657–672 (WWAALLTNVIVLSLYI). Over 673–1136 (YVSYKKPDVN…NHQSVLTFYS (464 aa)) the chain is Cytoplasmic. Positions 689-702 (ALTYHQALTHSLQL) are scissor helix. Residues 875-921 (SKDSDGDSSKPSSKATSVQNSPAVQKDEDDDGKAHTQPLLKKDKKSP) are disordered. T1059 is subject to Phosphothreonine.

It belongs to the SLC12A transporter family. In terms of assembly, homodimer; adopts a domain-swap conformation at the scissor helices connecting the transmembrane domain and C-terminal domain. Post-translationally, phosphorylated at Thr-125, Thr-129 and Thr-134 by OXSR1/OSR1 and STK39/SPAK downstream of WNK kinases (WNK1, WNK2, WNK3 or WNK4), promoting its activity.

The protein resides in the basolateral cell membrane. The enzyme catalyses K(+)(out) + 2 chloride(out) + Na(+)(out) = K(+)(in) + 2 chloride(in) + Na(+)(in). Activated following phosphorylation by OXSR1/OSR1 and STK39/SPAK. Inhibited by bumetanide. Functionally, cation-chloride cotransporter which mediates the electroneutral transport of chloride, potassium and/or sodium ions across the membrane. Plays a vital role in the regulation of ionic balance and cell volume. Important for maintenance of endolymph volume in the otic vesicle, probably by regulating ion homeostasis. Also plays a role in normal development of the swim bladder. The protein is Solute carrier family 12 member 2 of Danio rerio (Zebrafish).